Here is a 356-residue protein sequence, read N- to C-terminus: Retinoic acid-induced protein 3 (356 aa).

At 1 to 35 (MTTPTTAPSGCRSDLDSRYHRLCDLAEGWGIALET) the chain is on the extracellular side. The chain crosses the membrane as a helical span at residues 36–56 (LAAVGAVATVACMFALVFLIC). Topologically, residues 57 to 68 (KVQDSNKRKMLP) are cytoplasmic. Residues 69–89 (AQFLFLLGVLGVFGLTFAFII) form a helical membrane-spanning segment. Residues 90–101 (KLDGATGPTRFF) lie on the Extracellular side of the membrane. A helical membrane pass occupies residues 102–122 (LFGVLFAICFSCLLAHAFNLI). Residues 123–131 (KLVRGRKPL) are Cytoplasmic-facing. A helical transmembrane segment spans residues 132–152 (SWLVILSLAVGFSLVQDVIAI). Residues 153-178 (EYLVLTMNRTNVNVFSELPAPRRNED) lie on the Extracellular side of the membrane. Asn-160 is a glycosylation site (N-linked (GlcNAc...) asparagine). The helical transmembrane segment at 179 to 199 (FVMLLIYVLVLMVLTFFTSFL) threads the bilayer. The Cytoplasmic segment spans residues 200-214 (VFCGSFSGWKRHGFH). A helical transmembrane segment spans residues 215 to 235 (ICFTSFLSIAIWVAWIVLLLI). Topologically, residues 236-244 (PDIDRKWDD) are extracellular. A helical transmembrane segment spans residues 245–265 (TILSTALVANGWVFLAFYILP). Topologically, residues 266 to 356 (EFRQLPRQRS…NDYEGRKGDS (91 aa)) are cytoplasmic. Phosphoserine is present on Ser-303. Tyr-318 and Tyr-321 each carry phosphotyrosine. The tract at residues 336–356 (IPRAQAPASPYNDYEGRKGDS) is disordered. Ser-344 is subject to Phosphoserine. A phosphotyrosine mark is found at Tyr-346 and Tyr-349.

It belongs to the G-protein coupled receptor 3 family. As to quaternary structure, interacts (via its transmembrane domain) with EGFR. In terms of processing, phosphorylated in two conserved double-tyrosine motifs, Tyr 318/Tyr-321 and Tyr-346/Tyr-349 by EGFR. Tyr-318 and Tyr-321 are the preferred residues responsible for EGFR-mediated GPRC5A phosphorylation. In terms of tissue distribution, expressed predominantly in normal fetal and adult lung. Almost undetectable or expressed at very low levels in other tissues.

It localises to the cell membrane. Functionally, orphan receptor. Could be involved in modulating differentiation and maintaining homeostasis of epithelial cells. This retinoic acid-inducible GPCR provides evidence for a possible interaction between retinoid and G-protein signaling pathways. Functions as a negative modulator of EGFR signaling. Acts as a lung tumor suppressor. This chain is Retinoic acid-induced protein 3 (Gprc5a), found in Mus musculus (Mouse).